A 241-amino-acid polypeptide reads, in one-letter code: tRNA pseudouridine synthase A (241 aa).

Asp-51 serves as the catalytic Nucleophile. Tyr-110 contributes to the substrate binding site.

It belongs to the tRNA pseudouridine synthase TruA family. Homodimer.

It carries out the reaction uridine(38/39/40) in tRNA = pseudouridine(38/39/40) in tRNA. In terms of biological role, formation of pseudouridine at positions 38, 39 and 40 in the anticodon stem and loop of transfer RNAs. This chain is tRNA pseudouridine synthase A, found in Campylobacter jejuni subsp. jejuni serotype O:23/36 (strain 81-176).